The primary structure comprises 118 residues: Large ribosomal subunit protein uL18 (118 aa).

The protein belongs to the universal ribosomal protein uL18 family. As to quaternary structure, part of the 50S ribosomal subunit; part of the 5S rRNA/L5/L18/L25 subcomplex. Contacts the 5S and 23S rRNAs.

This is one of the proteins that bind and probably mediate the attachment of the 5S RNA into the large ribosomal subunit, where it forms part of the central protuberance. The sequence is that of Large ribosomal subunit protein uL18 from Mycoplasmopsis pulmonis (strain UAB CTIP) (Mycoplasma pulmonis).